The following is a 667-amino-acid chain: Transmembrane 9 superfamily member 1 (667 aa).

The N-terminal stretch at 1-22 (MIYKMAHVQLLLLYFFVSTVKA) is a signal peptide. Residues 23-302 (FYLPGVAPTT…DKYLHVYDPS (280 aa)) lie on the Lumenal side of the membrane. Residues Asn61 and Asn282 are each glycosylated (N-linked (GlcNAc...) asparagine). A helical transmembrane segment spans residues 303 to 323 (IQWFSLINFSLVVVLLSSVVI). Over 324 to 370 (HSLLRALKSDFARYNELNLDDDFQEDSGWKLNHGDVFRSPSQSLTLS) the chain is Cytoplasmic. A helical membrane pass occupies residues 371-391 (ILVGSGVQLFLMVTCSIFFAA). The Lumenal portion of the chain corresponds to 392 to 405 (LGFLSPSSRGSLAT). A helical transmembrane segment spans residues 406–426 (VMFILYALFGFVGSYTSMGIY). At 427–442 (KFFNGPYWKANLILTP) the chain is on the cytoplasmic side. A helical transmembrane segment spans residues 443 to 463 (LLVPGAILLIIIALNFFLMFV). Topologically, residues 464-474 (HSSGVIPASTL) are lumenal. The helical transmembrane segment at 475–495 (FFMVFLWFLFSIPLSFAGSLI) threads the bilayer. Over 496–527 (ARKRCHWDEHPTKTNQIARQIPFQPWYLKTIP) the chain is Cytoplasmic. The helical transmembrane segment at 528–548 (ATLIAGIFPFGSIAVELYFIY) threads the bilayer. Residues 549 to 560 (TSLWFNKIFYMF) are Lumenal-facing. A helical transmembrane segment spans residues 561-581 (GFLFFSFLLLTLTSSLVTILI). The Cytoplasmic segment spans residues 582 to 596 (TYHSLCLENWKWQWR). The helical transmembrane segment at 597 to 617 (GFIIGGAGCALYVFIHSILFT) threads the bilayer. At 618-635 (KFKLGGFTTIVLYVGYSS) the chain is on the lumenal side. A helical transmembrane segment spans residues 636 to 656 (VISLLCCLVTGSIGFISSMLF). Residues 657–667 (VRKIYSSIKVD) are Cytoplasmic-facing.

The protein belongs to the nonaspanin (TM9SF) (TC 9.A.2) family.

It localises to the endosome membrane. It is found in the vacuole membrane. With TMN2 and TMN3, plays a critical role in the late stages of a nutrient-controlled pathway notably regulating FLO11 gene expression. Acts downstream of RAS2 and TOR. Essential for cell adhesion and filamentous growth. May play a role as effector of cellular copper homeostasis. The protein is Transmembrane 9 superfamily member 1 (EMP70) of Saccharomyces cerevisiae (strain ATCC 204508 / S288c) (Baker's yeast).